Reading from the N-terminus, the 1985-residue chain is Treslin (1985 aa).

8 disordered regions span residues Ala-574–Thr-609, Glu-791–Lys-858, Ile-894–Glu-974, Arg-999–Ser-1033, Val-1072–Arg-1156, Val-1184–Tyr-1243, His-1849–Ser-1875, and Phe-1938–Arg-1966. The span at Arg-823–Arg-837 shows a compositional bias: basic residues. Low complexity predominate over residues Ser-964 to Glu-974. Polar residues-rich tracts occupy residues Arg-999 to Gln-1026 and Ser-1085 to Asn-1097. The segment covering Thr-1105–Arg-1114 has biased composition (low complexity). Composition is skewed to basic and acidic residues over residues Lys-1144–Arg-1156 and Gln-1191–Thr-1200. A compositionally biased stretch (polar residues) spans Pro-1201–Pro-1224. The span at Arg-1225–Arg-1238 shows a compositional bias: basic and acidic residues.

This sequence belongs to the treslin family. Interacts with topbp1 (via BRCT domains); interaction is cdk2-dependent. Component of the replisome complex. Post-translationally, phosphorylated during interphase. Cdk2 promotes both phosphorylation and formation of a ticrr-topbp1 complex.

Its subcellular location is the nucleus. Functionally, regulator of DNA replication and S/M and G2/M checkpoints. Regulates the triggering of DNA replication initiation via its interaction with topbp1 by participating in cdk2-mediated loading of cdc45l onto replication origins. Required for the transition from pre-replication complex (pre-RC) to pre-initiation complex (pre-IC). Required to prevent mitotic entry after treatment with ionizing radiation. This chain is Treslin (ticrr), found in Xenopus laevis (African clawed frog).